A 125-amino-acid chain; its full sequence is MADLAKIVDDLSSLTVLEAAELSKLLEEKWGVSAAAPVAVAAAAGGAGPAVVEEEKTEFDVILVEAGANKINVIKEVRAITGLGLKEAKDLVEGAPKAVKEGVNKAEAADIKKKLEDAGAKADVK.

It belongs to the bacterial ribosomal protein bL12 family. In terms of assembly, homodimer. Part of the ribosomal stalk of the 50S ribosomal subunit. Forms a multimeric L10(L12)X complex, where L10 forms an elongated spine to which 2 to 4 L12 dimers bind in a sequential fashion. Binds GTP-bound translation factors.

Functionally, forms part of the ribosomal stalk which helps the ribosome interact with GTP-bound translation factors. Is thus essential for accurate translation. The protein is Large ribosomal subunit protein bL12 of Rhizobium leguminosarum bv. trifolii (strain WSM2304).